The chain runs to 428 residues: Ribulose bisphosphate carboxylase (428 aa).

Lys-151 (proton acceptor) is an active-site residue. Lys-153 serves as a coordination point for substrate. The Mg(2+) site is built by Lys-177, Asp-179, and Glu-180. Lys-177 carries the N6-carboxylysine modification. The Proton acceptor role is filled by His-270. Residues Arg-271, His-303, 354 to 356 (SGG), and 376 to 379 (QFGG) contribute to the substrate site.

Belongs to the RuBisCO large chain family. Type III subfamily. Homodimer or homodecamer. In contrast to form I RuBisCO, the form III RuBisCO is composed solely of large subunits. Mg(2+) is required as a cofactor.

The catalysed reaction is 2 (2R)-3-phosphoglycerate + 2 H(+) = D-ribulose 1,5-bisphosphate + CO2 + H2O. It catalyses the reaction D-ribulose 1,5-bisphosphate + O2 = 2-phosphoglycolate + (2R)-3-phosphoglycerate + 2 H(+). Functionally, catalyzes the addition of molecular CO(2) and H(2)O to ribulose 1,5-bisphosphate (RuBP), generating two molecules of 3-phosphoglycerate (3-PGA). Functions in an archaeal AMP degradation pathway, together with AMP phosphorylase and R15P isomerase. The protein is Ribulose bisphosphate carboxylase of Methanosarcina barkeri (strain Fusaro / DSM 804).